A 465-amino-acid chain; its full sequence is Lactaldehyde dehydrogenase (465 aa).

220–225 (GSVEVG) is an NAD(+) binding site. Catalysis depends on residues E240 and C274.

This sequence belongs to the aldehyde dehydrogenase family. In terms of assembly, homotetramer.

The enzyme catalyses (S)-lactaldehyde + NAD(+) + H2O = (S)-lactate + NADH + 2 H(+). It functions in the pathway cofactor biosynthesis; coenzyme F420 biosynthesis. In terms of biological role, involved in F420 biosynthesis through the oxidation of lactaldehyde to lactate. This chain is Lactaldehyde dehydrogenase, found in Methanococcus maripaludis (strain C5 / ATCC BAA-1333).